The following is a 443-amino-acid chain: Packaging protein 1 (443 aa).

The tract at residues 1-75 (MSGAADGTVP…PEAAQPPPSR (75 aa)) is disordered. Positions 13-56 (EDTHQEDSGERECEQRPVHSGREATGESDPALERPDHGERHGPE) are enriched in basic and acidic residues. Position 169–176 (169–176 (GPTGSGKS)) interacts with ATP. The DNA-binding stretch occupies residues 433 to 443 (VSYANKRKWYD).

This sequence belongs to the adenoviridae packaging protein 1 family. As to quaternary structure, homodimer. Part of a genome packaging complex composed of packaging proteins 1, 2 and 3; this complex specifically binds to the packaging sequence on the left end of viral genomic DNA and performs packaging of the viral genome. Interacts with protein 33K.

Its subcellular location is the virion. It is found in the host nucleus. The protein resides in the host nucleoplasm. It localises to the host nucleolus. Its function is as follows. Component of the packaging machinery which encapsidates the viral DNA into preformed capsids and transcriptional activator of the viral major late promoter (MLP). Binds, along with packaging proteins 2 and 3, to the specific packaging sequence on the left end of viral genomic DNA and displays ATPase activity thereby providing the power stroke of the packaging machinery. The activity of packaging protein IVa2 is stimulated by protein 33K which acts as a terminase. May be the protein that pumps DNA into the capsid powered by ATP hydrolysis. Specifically binds to the 5'-CG-3' nucleotides of the repeats making up the packaging sequence. Component of the DEF-A and DEF-B transcription factors that bind downstream elements of the major late promoter (MLP), and stimulate transcription from the MLP after initiation of viral DNA replication. DEF-A is a heterodimer packaging proteins 1 and 2 and DEF-B is a homodimer of packaging protein 1. This chain is Packaging protein 1, found in Pantherophis guttatus (Corn snake).